The following is a 577-amino-acid chain: 2-hydroxyacyl-CoA lyase (577 aa).

Glu-59 lines the thiamine diphosphate pocket. Positions 412–493 (TMDVGRAVLV…VIVFNNNGVY (82 aa)) are thiamine pyrophosphate binding. Mg(2+) contacts are provided by Asp-462 and Asn-489.

Belongs to the TPP enzyme family. As to quaternary structure, homotetramer. It depends on Mg(2+) as a cofactor. Requires thiamine diphosphate as cofactor.

The enzyme catalyses an (R)-2-hydroxy-long-chain-fatty acyl-CoA = a long-chain fatty aldehyde + formyl-CoA. It catalyses the reaction a 2-hydroxy-3-methyl fatty acyl-CoA = a 2-methyl-branched fatty aldehyde + formyl-CoA. Its function is as follows. Catalyzes a carbon-carbon cleavage reaction; cleaves a 2-hydroxy-3-methylacyl-CoA into formyl-CoA and a 2-methyl-branched fatty aldehyde. The chain is 2-hydroxyacyl-CoA lyase from Oryza sativa subsp. japonica (Rice).